The primary structure comprises 1206 residues: uncharacterized protein (1206 aa).

Disordered regions lie at residues 133-547 (YDLD…PVDY), 568-837 (FASS…DQLL), and 859-1206 (RQRA…KATS). Composition is skewed to pro residues over residues 139–151 (IPPP…PGPP) and 159–234 (GESP…PPAP). Position 255 is a phosphoserine (S255). Over residues 305-319 (VRTSSIPVQEAPGAS) the composition is skewed to low complexity. Positions 351–363 (RALEPEQPREPRP) are enriched in basic and acidic residues. The segment covering 384–413 (APPPAPPLPPPAPPLPPPAPSLPPAAPPLP) has biased composition (pro residues). Positions 414–436 (STELAAPPSSGFMKTSKSNSPAL) are enriched in low complexity. A compositionally biased stretch (basic and acidic residues) spans 454–467 (VDWRDPRQMEKLRS). Over residues 522–531 (PEKSPSSSSL) the composition is skewed to low complexity. Over residues 568–577 (FASSAEKEAK) the composition is skewed to basic and acidic residues. The segment covering 656 to 671 (LPKATPGLTLPLKPTP) has biased composition (low complexity). T680 is modified (phosphothreonine). Residues 732–747 (AEKDLASVRQREKPET) show a composition bias toward basic and acidic residues. Positions 1001–1016 (IPPPPEFSNDPEPPAP) are enriched in pro residues. Positions 1028 to 1041 (PRNNFSDLGQSWGP) are enriched in polar residues. An omega-N-methylarginine mark is found at R1051, R1083, and R1094. Positions 1170–1184 (PHGNTHYGSPINTFT) are enriched in polar residues.

This is an uncharacterized protein from Mus musculus (Mouse).